Consider the following 107-residue polypeptide: N(4)-acetylcytidine amidohydrolase (107 aa).

An ASCH domain is found at 9–105; sequence TFFEFLTPLI…KLFVIEYELI (97 aa). Lysine 23 serves as the catalytic Proton acceptor. The active-site Nucleophile is the threonine 26. Catalysis depends on glutamate 76, which acts as the Proton donor.

This sequence belongs to the N(4)-acetylcytidine amidohydrolase family.

It carries out the reaction N(4)-acetylcytidine + H2O = cytidine + acetate + H(+). The enzyme catalyses N(4)-acetyl-2'-deoxycytidine + H2O = 2'-deoxycytidine + acetate + H(+). It catalyses the reaction N(4)-acetylcytosine + H2O = cytosine + acetate + H(+). Its function is as follows. Catalyzes the hydrolysis of N(4)-acetylcytidine (ac4C). The chain is N(4)-acetylcytidine amidohydrolase from Vibrio parahaemolyticus serotype O3:K6 (strain RIMD 2210633).